The sequence spans 124 residues: Anamorsin homolog (124 aa).

Polar residues predominate over residues 1–20 (MSSPAPSTSHNAANSTQAFS). Disordered regions lie at residues 1–39 (MSSP…EDRE) and 40–124 (AKST…TDDI). Cys49, Cys56, Cys59, and Cys61 together coordinate [2Fe-2S] cluster. Residues 49–61 (CATRRRACKNCTC) are fe-S binding site A. Residues Cys86, Cys89, Cys97, and Cys100 each contribute to the [4Fe-4S] cluster site. 2 consecutive short sequence motifs (cx2C motif) follow at residues 86–89 (CGNC) and 97–100 (CAGC). The fe-S binding site B stretch occupies residues 86–100 (CGNCAKGDAFRCAGC).

Belongs to the anamorsin family. As to quaternary structure, monomer. It depends on [2Fe-2S] cluster as a cofactor. Requires [4Fe-4S] cluster as cofactor.

The protein localises to the cytoplasm. It localises to the mitochondrion intermembrane space. Its function is as follows. Component of the cytosolic iron-sulfur (Fe-S) protein assembly (CIA) machinery. Required for the maturation of extramitochondrial Fe-S proteins. Part of an electron transfer chain functioning in an early step of cytosolic Fe-S biogenesis, facilitating the de novo assembly of a [4Fe-4S] cluster on the cytosolic Fe-S scaffold complex. Electrons are transferred from NADPH via a FAD- and FMN-containing diflavin oxidoreductase. Together with the diflavin oxidoreductase, also required for the assembly of the diferric tyrosyl radical cofactor of ribonucleotide reductase (RNR), probably by providing electrons for reduction during radical cofactor maturation in the catalytic small subunit. The polypeptide is Anamorsin homolog (Trypanosoma brucei brucei (strain 927/4 GUTat10.1)).